We begin with the raw amino-acid sequence, 156 residues long: ATP synthase subunit b (156 aa).

Residues 4–26 (GATFWGPMISFALFVWFTMKYVW) traverse the membrane as a helical segment.

The protein belongs to the ATPase B chain family. In terms of assembly, F-type ATPases have 2 components, F(1) - the catalytic core - and F(0) - the membrane proton channel. F(1) has five subunits: alpha(3), beta(3), gamma(1), delta(1), epsilon(1). F(0) has three main subunits: a(1), b(2) and c(10-14). The alpha and beta chains form an alternating ring which encloses part of the gamma chain. F(1) is attached to F(0) by a central stalk formed by the gamma and epsilon chains, while a peripheral stalk is formed by the delta and b chains.

The protein localises to the cell inner membrane. Its function is as follows. F(1)F(0) ATP synthase produces ATP from ADP in the presence of a proton or sodium gradient. F-type ATPases consist of two structural domains, F(1) containing the extramembraneous catalytic core and F(0) containing the membrane proton channel, linked together by a central stalk and a peripheral stalk. During catalysis, ATP synthesis in the catalytic domain of F(1) is coupled via a rotary mechanism of the central stalk subunits to proton translocation. Component of the F(0) channel, it forms part of the peripheral stalk, linking F(1) to F(0). The sequence is that of ATP synthase subunit b from Alkalilimnicola ehrlichii (strain ATCC BAA-1101 / DSM 17681 / MLHE-1).